The primary structure comprises 126 residues: uncharacterized protein (126 aa).

Residues 13–45 (VAPKAGREEEQPPPPAGLGCGARGEPGRGPLEH) form a disordered region.

The protein localises to the cytoplasm. It localises to the cytoskeleton. Its subcellular location is the cilium basal body. This is an uncharacterized protein from Homo sapiens (Human).